Consider the following 301-residue polypeptide: MAANYWASTQRRHWLFTKERLADIRESFRERDKAAHSQFPLPDQRLLNIYFSQQLIKLGKRMSTRQQALATAQVYIKRFYTKNEIRHTNPYLVVTTAFYLACKMEECPQHIRFVVAEARNFWPEFIAPDVSKLGECEFALISEMNSQLIVHHPYRTLSELQPELSLTSDEVALAWSVINDHYLTDLPLLYPPHVIAVMAIIVAVVFKPSQTSFHGTAAPLAGAMRDGGMNILAALGDKNGAGPPPRIQKLVGWLAESEVDIRAVIECTQELVSLYEIWENYSEKHCKELLGRMVKSKNLDK.

The region spanning 53–142 (QQLIKLGKRM…LGECEFALIS (90 aa)) is the Cyclin N-terminal domain.

Belongs to the cyclin family. Cyclin C subfamily. Component of the srb8-11 complex, a regulatory module of the Mediator complex.

It localises to the nucleus. In terms of biological role, component of the srb8-11 complex. The srb8-11 complex is a regulatory module of the Mediator complex which is itself involved in regulation of basal and activated RNA polymerase II-dependent transcription. The srb8-11 complex may be involved in the transcriptional repression of a subset of genes regulated by Mediator. It may inhibit the association of the Mediator complex with RNA polymerase II to form the holoenzyme complex. The srb8-11 complex phosphorylates the C-terminal domain (CTD) of the largest subunit of RNA polymerase II. The sequence is that of RNA polymerase II holoenzyme cyclin-like subunit (ssn8) from Aspergillus oryzae (strain ATCC 42149 / RIB 40) (Yellow koji mold).